Consider the following 286-residue polypeptide: Aquaporin PIP2-4 (286 aa).

The next 2 helical transmembrane spans lie at 40–60 (ALIA…ATVI) and 77–97 (CGGV…FILV). The NPA 1 motif lies at 109 to 111 (NPA). The next 3 membrane-spanning stretches (helical) occupy residues 128–148 (LLYM…VKGF), 170–190 (GTGL…VFSA), and 204–224 (VLAP…TIPI). The short motif at 230 to 232 (NPA) is the NPA 2 element. A helical transmembrane segment spans residues 252 to 272 (IFWVGPFIGAAIAALYHQVIL).

The protein belongs to the MIP/aquaporin (TC 1.A.8) family. PIP (TC 1.A.8.11) subfamily. In terms of tissue distribution, expressed in roots.

The protein localises to the cell membrane. Its function is as follows. Water channel required to facilitate the transport of water across cell membrane. May play a role in root water uptake. The chain is Aquaporin PIP2-4 (PIP2-4) from Oryza sativa subsp. japonica (Rice).